Consider the following 547-residue polypeptide: Chaperonin GroEL 1 (547 aa).

Residues 30–33 (TLGP), Lys51, 87–91 (DGTTT), Gly415, and Asp495 each bind ATP.

Belongs to the chaperonin (HSP60) family. As to quaternary structure, forms a cylinder of 14 subunits composed of two heptameric rings stacked back-to-back. Interacts with the co-chaperonin GroES.

It localises to the cytoplasm. The catalysed reaction is ATP + H2O + a folded polypeptide = ADP + phosphate + an unfolded polypeptide.. Functionally, together with its co-chaperonin GroES, plays an essential role in assisting protein folding. The GroEL-GroES system forms a nano-cage that allows encapsulation of the non-native substrate proteins and provides a physical environment optimized to promote and accelerate protein folding. The sequence is that of Chaperonin GroEL 1 from Rhizobium johnstonii (strain DSM 114642 / LMG 32736 / 3841) (Rhizobium leguminosarum bv. viciae).